A 257-amino-acid chain; its full sequence is Probable enoyl-CoA hydratase echA8 (257 aa).

Belongs to the enoyl-CoA hydratase/isomerase family.

It carries out the reaction a (3S)-3-hydroxyacyl-CoA = a (2E)-enoyl-CoA + H2O. The catalysed reaction is a 4-saturated-(3S)-3-hydroxyacyl-CoA = a (3E)-enoyl-CoA + H2O. Functionally, could possibly oxidize fatty acids using specific components. The chain is Probable enoyl-CoA hydratase echA8 (echA8) from Mycobacterium tuberculosis (strain CDC 1551 / Oshkosh).